The primary structure comprises 512 residues: MKLDSAEEKSGVGCSLPAEGSPPALEPAFSKILNRLSRPKSSGQGGARNAALKDLGALIEAAEGDRFFEGSGSGGSLRGMPEILGQVVRALEKFAAPEEKADGVEEHPEVPEKATEVGSLFLKLLGKVEAAKSSPDCPAWKTGLRHMSGPVYIFAITHRLKQPWTSPASQHVAGEVLSLLLRVTECSSVAGFLCGENEDDRGRFAVVLGLLKPHLNKETWKKNPAVKHVFSWTLQQVTQPWLNQHLEKILPPSLLISDDYQTENKILGVQCLHHIVVTVPAADLLQYNRAQVLYHALFNHLYMPEHHLIQAVLLCLLDLFPVLEKALHWKGDTARVTTHCHEVLQLILTHMEPEHRLLLRRTYARHLPAFVKRLGILTVRHLKRLEQVILGYLEVYDEPEDETRLKILETLKLVMQYTWPRIPCRVVVLLKALLKLICDISRDTIPTTEAAKSTMLQEATDCLILLDHCSQGQVKGLLAKIAVSCEDSTVVSCIRKVQQGSADSPGDDTEGD.

Basic and acidic residues predominate over residues 1–10 (MKLDSAEEKS). Positions 1–23 (MKLDSAEEKSGVGCSLPAEGSPP) are disordered.

Belongs to the TTI2 family. In terms of assembly, component of the TTT complex composed of TELO2, TTI1 and TTI2. Interacts with TELO2 and TTI1. Interacts with WAC; WAC positively regulates MTOR activity by promoting the assembly of the TTT complex and the RUVBL complex composed of RUVBL1 and RUVBL2 into the TTT-RUVBL complex which leads to the dimerization of the mTORC1 complex and its subsequent activation.

Its function is as follows. Regulator of the DNA damage response (DDR). Part of the TTT complex that is required to stabilize protein levels of the phosphatidylinositol 3-kinase-related protein kinase (PIKK) family proteins. The TTT complex is involved in the cellular resistance to DNA damage stresses, like ionizing radiation (IR), ultraviolet (UV) and mitomycin C (MMC). Together with the TTT complex and HSP90 may participate in the proper folding of newly synthesized PIKKs. The chain is TELO2-interacting protein 2 (Tti2) from Mus musculus (Mouse).